A 174-amino-acid polypeptide reads, in one-letter code: Gamma-crystallin F (174 aa).

Beta/gamma crystallin 'Greek key' domains are found at residues 2–40 and 41–83; these read GKIT…RVDS and GCWM…RLIP. Positions 84–87 are connecting peptide; that stretch reads HTGS. Beta/gamma crystallin 'Greek key' domains lie at 88–128 and 129–171; these read HRLR…NVLE and GWWV…RRAV.

Belongs to the beta/gamma-crystallin family.

Its function is as follows. Crystallins are the dominant structural components of the vertebrate eye lens. The chain is Gamma-crystallin F (CRYGF) from Bos taurus (Bovine).